We begin with the raw amino-acid sequence, 254 residues long: MVSNIDHKAMEALLRGQGCANNLKILLENGEISSVSTEPLIHTILDSFSLALSFMDSPNHPPYHESSSHNMASHMSRRSSKQVQHRRKLCVAEGLVNYNHDSRTMCPNDGFTWRKYGQKTIKASAHKRCYYRCTYAKDQNCNATKRVQKIKDNPPVYRTTYLGKHVCKAFAVHDDTYSSTMIRFDQVVPEPIMPQLTTIDHQVITVEENSAEHIMNQECDINDYLVDDDPFWASQFPPFPSSDTMFLENISAFD.

A DNA-binding region (WRKY) is located at residues 102–170; it reads SRTMCPNDGF…YLGKHVCKAF (69 aa).

It belongs to the WRKY group III family.

It localises to the nucleus. Its function is as follows. Transcription factor. Interacts specifically with the W box (5'-(T)TGAC[CT]-3'), a frequently occurring elicitor-responsive cis-acting element. This chain is Probable WRKY transcription factor 67 (WRKY67), found in Arabidopsis thaliana (Mouse-ear cress).